Reading from the N-terminus, the 155-residue chain is Large ribosomal subunit protein uL13 (155 aa).

Belongs to the universal ribosomal protein uL13 family. Part of the 50S ribosomal subunit.

Functionally, this protein is one of the early assembly proteins of the 50S ribosomal subunit, although it is not seen to bind rRNA by itself. It is important during the early stages of 50S assembly. This is Large ribosomal subunit protein uL13 from Rickettsia akari (strain Hartford).